The chain runs to 201 residues: Ribosome maturation factor RimP (201 aa).

The tract at residues 180 to 201 is disordered; the sequence is LRRGSAPAQDEEGEDEAPGAPL. The segment covering 188 to 201 has biased composition (acidic residues); that stretch reads QDEEGEDEAPGAPL.

The protein belongs to the RimP family.

Its subcellular location is the cytoplasm. Its function is as follows. Required for maturation of 30S ribosomal subunits. The chain is Ribosome maturation factor RimP from Methylobacterium sp. (strain 4-46).